A 201-amino-acid chain; its full sequence is Probable quinol oxidase subunit 3 (201 aa).

The next 5 helical transmembrane spans lie at 20–40, 62–82, 91–111, 133–153, and 172–192; these read LGFWIFITAEFALFGTLFATL, LVLIMTFALLFSSYTCGIAIY, LMMFWMIITLLLGLVFVGFEI, FFILLGTHGCHVSLGIVWAIC, and FIVSLYWHFLDVVWVFIFTAV.

The protein belongs to the cytochrome c oxidase subunit 3 family.

The protein localises to the cell membrane. The catalysed reaction is 2 a quinol + O2 = 2 a quinone + 2 H2O. Functionally, catalyzes quinol oxidation with the concomitant reduction of oxygen to water. The polypeptide is Probable quinol oxidase subunit 3 (qoxC) (Staphylococcus aureus (strain MSSA476)).